The primary structure comprises 167 residues: MKIKKLLKNGLSLFLTFIVITSILDFVRRPVVPEEINKITLQDLQGNTFSLESLDQNKPTLLYFWGTWCGYCRYTSPAINSLAKEGYQVVSVALRSGNEADVNDYLSKNDYHFTTVNDPKGEFAERWQINVTPTIVLLSKGKMDLVTTGLTSYWGLKVRLFFAEFFG.

The chain crosses the membrane as a helical span at residues 10–27 (GLSLFLTFIVITSILDFV). A Thioredoxin domain is found at 30–167 (PVVPEEINKI…VRLFFAEFFG (138 aa)). C69 and C72 are disulfide-bonded.

It belongs to the thioredoxin family.

It is found in the cell membrane. The sequence is that of Thioredoxin-like protein HI_1115 from Haemophilus influenzae (strain ATCC 51907 / DSM 11121 / KW20 / Rd).